Here is a 525-residue protein sequence, read N- to C-terminus: MPKISTESVNTTIAPSQPASTAPKDTATLFNPAKPTATPAQSSIDSVQPYHHKANHNQNRSIAQSGDATSSATASSSVTAAPKIGFVSLGCPKALVDSERIITELSRDGYQVASDYDGADLVVVNTCGFIESAVQESLDAIGEAISKNGKVIVTGCLGKEADKIREMHPAVLAVTGAHAYDEVIRAVALHVPKPDRSLDASYDPKIDLINEAGIKLTPSHYAYLKISEGCNHRCTFCIIPSLRGDLVSRPIDSVMNEALALKKAGVKELLIISQDTSAYGLDLKYKTSFWNGMPLKSKFYDLCQALNDLGIWVRLHYVYPYPHVDKVVELMGEKKLLPYLDIPFQHASHRILKAMKRPAHSENTLARIHAWREICPDIVIRSTFVVGFPGETEEDFQCLLDWLVEARLDRVGAFTYSEVEGAVANDLPNHVPEDVKQERYERLMTLQQDISAQKLQEKIGKTLMVLVDEIDREEGVAICRSYADAPEIDGHVYVDDIDAHVKVGQFLTVTIDDASEYDLFASYQA.

The span at 1–20 (MPKISTESVNTTIAPSQPAS) shows a compositional bias: polar residues. Positions 1–44 (MPKISTESVNTTIAPSQPASTAPKDTATLFNPAKPTATPAQSSI) are disordered. The 111-residue stretch at 82–192 (PKIGFVSLGC…VIRAVALHVP (111 aa)) folds into the MTTase N-terminal domain. Positions 91, 127, 156, 230, 234, and 237 each coordinate [4Fe-4S] cluster. Positions 216 to 453 (LTPSHYAYLK…MTLQQDISAQ (238 aa)) constitute a Radical SAM core domain. Positions 456-525 (QEKIGKTLMV…EYDLFASYQA (70 aa)) constitute a TRAM domain.

Belongs to the methylthiotransferase family. RimO subfamily. Requires [4Fe-4S] cluster as cofactor.

It is found in the cytoplasm. The catalysed reaction is L-aspartate(89)-[ribosomal protein uS12]-hydrogen + (sulfur carrier)-SH + AH2 + 2 S-adenosyl-L-methionine = 3-methylsulfanyl-L-aspartate(89)-[ribosomal protein uS12]-hydrogen + (sulfur carrier)-H + 5'-deoxyadenosine + L-methionine + A + S-adenosyl-L-homocysteine + 2 H(+). In terms of biological role, catalyzes the methylthiolation of an aspartic acid residue of ribosomal protein uS12. The chain is Ribosomal protein uS12 methylthiotransferase RimO from Psychrobacter arcticus (strain DSM 17307 / VKM B-2377 / 273-4).